We begin with the raw amino-acid sequence, 101 residues long: NAD(P)H-quinone oxidoreductase subunit 4L, chloroplastic (101 aa).

2 consecutive transmembrane segments (helical) span residues 2–22 (MFEH…YGLI) and 61–81 (IFSI…LAIV).

Belongs to the complex I subunit 4L family. As to quaternary structure, NDH is composed of at least 16 different subunits, 5 of which are encoded in the nucleus.

Its subcellular location is the plastid. The protein resides in the chloroplast thylakoid membrane. It catalyses the reaction a plastoquinone + NADH + (n+1) H(+)(in) = a plastoquinol + NAD(+) + n H(+)(out). The enzyme catalyses a plastoquinone + NADPH + (n+1) H(+)(in) = a plastoquinol + NADP(+) + n H(+)(out). NDH shuttles electrons from NAD(P)H:plastoquinone, via FMN and iron-sulfur (Fe-S) centers, to quinones in the photosynthetic chain and possibly in a chloroplast respiratory chain. The immediate electron acceptor for the enzyme in this species is believed to be plastoquinone. Couples the redox reaction to proton translocation, and thus conserves the redox energy in a proton gradient. This chain is NAD(P)H-quinone oxidoreductase subunit 4L, chloroplastic, found in Dioscorea elephantipes (Elephant's foot yam).